The chain runs to 112 residues: Citrate synthase (112 aa).

Catalysis depends on residues His39 and Asp97.

This sequence belongs to the citrate synthase family.

The enzyme catalyses oxaloacetate + acetyl-CoA + H2O = citrate + CoA + H(+). It participates in carbohydrate metabolism; tricarboxylic acid cycle; isocitrate from oxaloacetate: step 1/2. This chain is Citrate synthase (gltA), found in Bartonella vinsonii subsp. berkhoffii.